Reading from the N-terminus, the 442-residue chain is Chitinase-like protein Idgf4 (442 aa).

Positions 1–21 are cleaved as a signal peptide; that stretch reads MKLYALFSLLVGSLAIGQISA. One can recognise a GH18 domain in the interval 25–442; the sequence is HHLLCYYDGN…PILRQVKSKL (418 aa). An intrachain disulfide couples cysteine 29 to cysteine 56. N-linked (GlcNAc...) asparagine glycosylation is present at asparagine 224. Cysteine 343 and cysteine 426 are joined by a disulfide.

Belongs to the glycosyl hydrolase 18 family. IDGF subfamily. Post-translationally, glycosylated. Primarily expressed in yolk cells and fat body. In larvae, it is expressed in the imaginal ring, the salivary duct, large salivary gland cells and weakly expressed in imaginal disks. More strongly expressed than Idgf1 and Idgf3.

Its subcellular location is the secreted. In terms of biological role, cooperates with insulin-like peptides to stimulate the proliferation, polarization and motility of imaginal disk cells. May act by stabilizing the binding of insulin-like peptides to its receptor through a simultaneous interaction with both molecules to form a multiprotein signaling complex. In Drosophila melanogaster (Fruit fly), this protein is Chitinase-like protein Idgf4 (Idgf4).